The sequence spans 438 residues: Serine hydroxymethyltransferase (438 aa).

Residues Leu-135 and 139-141 (GHL) each bind (6S)-5,6,7,8-tetrahydrofolate. The residue at position 244 (Lys-244) is an N6-(pyridoxal phosphate)lysine. A disordered region spans residues 361–383 (GVPNDPLPPVKTSGIRVGSPAGT).

This sequence belongs to the SHMT family. Homodimer. The cofactor is pyridoxal 5'-phosphate.

The protein localises to the cytoplasm. The catalysed reaction is (6R)-5,10-methylene-5,6,7,8-tetrahydrofolate + glycine + H2O = (6S)-5,6,7,8-tetrahydrofolate + L-serine. It participates in one-carbon metabolism; tetrahydrofolate interconversion. The protein operates within amino-acid biosynthesis; glycine biosynthesis; glycine from L-serine: step 1/1. In terms of biological role, catalyzes the reversible interconversion of serine and glycine with tetrahydrofolate (THF) serving as the one-carbon carrier. This reaction serves as the major source of one-carbon groups required for the biosynthesis of purines, thymidylate, methionine, and other important biomolecules. Also exhibits THF-independent aldolase activity toward beta-hydroxyamino acids, producing glycine and aldehydes, via a retro-aldol mechanism. The chain is Serine hydroxymethyltransferase from Rhizorhabdus wittichii (strain DSM 6014 / CCUG 31198 / JCM 15750 / NBRC 105917 / EY 4224 / RW1) (Sphingomonas wittichii).